The sequence spans 157 residues: Arginine repressor (157 aa).

The protein belongs to the ArgR family.

It localises to the cytoplasm. The protein operates within amino-acid biosynthesis; L-arginine biosynthesis [regulation]. In terms of biological role, regulates arginine biosynthesis genes. The polypeptide is Arginine repressor (Deinococcus radiodurans (strain ATCC 13939 / DSM 20539 / JCM 16871 / CCUG 27074 / LMG 4051 / NBRC 15346 / NCIMB 9279 / VKM B-1422 / R1)).